The sequence spans 184 residues: MNNLLAVIELLKQNQVVAYPTESVFGLGCNPNNEEAIRQLLQLKNRPIEKGLILVAPTKELLLPYIDESQLTEKHWQRFDTITEQAVTWIMPVHKNVSHYLTGKFNTIAVRLCRVPAVVKLCESLGFALTSTSANFTGLPPCRTALEVKQQFGDHFPVLEAETGNRMNPSEIRDIFTQHIFRQG.

The 184-residue stretch at 1–184 folds into the YrdC-like domain; that stretch reads MNNLLAVIEL…IFTQHIFRQG (184 aa).

It belongs to the SUA5 family. TsaC subfamily.

The protein resides in the cytoplasm. The enzyme catalyses L-threonine + hydrogencarbonate + ATP = L-threonylcarbamoyladenylate + diphosphate + H2O. Functionally, required for the formation of a threonylcarbamoyl group on adenosine at position 37 (t(6)A37) in tRNAs that read codons beginning with adenine. Catalyzes the conversion of L-threonine, HCO(3)(-)/CO(2) and ATP to give threonylcarbamoyl-AMP (TC-AMP) as the acyladenylate intermediate, with the release of diphosphate. The protein is Threonylcarbamoyl-AMP synthase of Haemophilus ducreyi (strain 35000HP / ATCC 700724).